The chain runs to 56 residues: Small ribosomal subunit protein bS21 (56 aa).

The protein belongs to the bacterial ribosomal protein bS21 family.

The polypeptide is Small ribosomal subunit protein bS21 (Dictyoglomus thermophilum (strain ATCC 35947 / DSM 3960 / H-6-12)).